Consider the following 235-residue polypeptide: Protein LIFEGUARD 1 (235 aa).

Helical transmembrane passes span Y33 to V53, L67 to F87, C95 to L115, I120 to F140, F149 to L169, L178 to D198, and I212 to I232.

This sequence belongs to the BI1 family. As to expression, expressed at very low in leaves.

The protein resides in the membrane. Functionally, (Microbial infection) Facilitates the development of the powdery mildew fungus E.cruciferarum. Its function is as follows. (Microbial infection) May prevent cell death upon A.alternata f.sp. lycopersici (AAL) toxin treatment. The protein is Protein LIFEGUARD 1 of Arabidopsis thaliana (Mouse-ear cress).